We begin with the raw amino-acid sequence, 309 residues long: Protease HtpX homolog (309 aa).

The next 2 membrane-spanning stretches (helical) occupy residues Asn-15–Ile-35 and Ile-54–Ile-74. His-165 is a Zn(2+) binding site. Glu-166 is a catalytic residue. Residue His-169 coordinates Zn(2+). Transmembrane regions (helical) follow at residues Val-181–Gly-201 and Met-213–Leu-233. Position 238 (Glu-238) interacts with Zn(2+).

Belongs to the peptidase M48B family. The cofactor is Zn(2+).

The protein localises to the cell inner membrane. This Helicobacter acinonychis (strain Sheeba) protein is Protease HtpX homolog.